We begin with the raw amino-acid sequence, 199 residues long: Chaperone protein TorD (199 aa).

It belongs to the TorD/DmsD family. TorD subfamily.

Its subcellular location is the cytoplasm. In terms of biological role, involved in the biogenesis of TorA. Acts on TorA before the insertion of the molybdenum cofactor and, as a result, probably favors a conformation of the apoenzyme that is competent for acquiring the cofactor. The sequence is that of Chaperone protein TorD from Escherichia coli (strain ATCC 8739 / DSM 1576 / NBRC 3972 / NCIMB 8545 / WDCM 00012 / Crooks).